Reading from the N-terminus, the 159-residue chain is Capsid protein (159 aa).

Ser2 is subject to N-acetylserine; by host.

This sequence belongs to the virgaviridae capsid protein family.

It localises to the virion. In terms of biological role, capsid protein self-assembles to form rod-shaped virions about 18 nm in diameter with a central canal enclosing the viral genomic RNA. The sequence is that of Capsid protein (CP) from Nicotiana tabacum (Common tobacco).